A 498-amino-acid chain; its full sequence is ATP synthase subunit beta, chloroplastic (498 aa).

172–179 contributes to the ATP binding site; that stretch reads GGAGVGKT.

Belongs to the ATPase alpha/beta chains family. In terms of assembly, F-type ATPases have 2 components, CF(1) - the catalytic core - and CF(0) - the membrane proton channel. CF(1) has five subunits: alpha(3), beta(3), gamma(1), delta(1), epsilon(1). CF(0) has four main subunits: a(1), b(1), b'(1) and c(9-12).

It is found in the plastid. Its subcellular location is the chloroplast thylakoid membrane. It catalyses the reaction ATP + H2O + 4 H(+)(in) = ADP + phosphate + 5 H(+)(out). In terms of biological role, produces ATP from ADP in the presence of a proton gradient across the membrane. The catalytic sites are hosted primarily by the beta subunits. The chain is ATP synthase subunit beta, chloroplastic from Solanum bulbocastanum (Wild potato).